The chain runs to 64 residues: DNA-binding protein 7 (64 aa).

2 positions are modified to N6-methyllysine: Lys-5 and Lys-7.

Belongs to the 7 kDa DNA-binding/endoribonuclease P2 family. As to quaternary structure, monomer.

The protein localises to the cytoplasm. Its function is as follows. Can constrain negative DNA supercoils. May be involved in maintaining the integrity of the genome at high temperature. The polypeptide is DNA-binding protein 7 (Sulfurisphaera tokodaii (strain DSM 16993 / JCM 10545 / NBRC 100140 / 7) (Sulfolobus tokodaii)).